Here is a 288-residue protein sequence, read N- to C-terminus: Bifunctional protein FolD (288 aa).

Residues 165–167 (GRS) and S190 contribute to the NADP(+) site.

Belongs to the tetrahydrofolate dehydrogenase/cyclohydrolase family. As to quaternary structure, homodimer.

It catalyses the reaction (6R)-5,10-methylene-5,6,7,8-tetrahydrofolate + NADP(+) = (6R)-5,10-methenyltetrahydrofolate + NADPH. The enzyme catalyses (6R)-5,10-methenyltetrahydrofolate + H2O = (6R)-10-formyltetrahydrofolate + H(+). It functions in the pathway one-carbon metabolism; tetrahydrofolate interconversion. In terms of biological role, catalyzes the oxidation of 5,10-methylenetetrahydrofolate to 5,10-methenyltetrahydrofolate and then the hydrolysis of 5,10-methenyltetrahydrofolate to 10-formyltetrahydrofolate. This Bdellovibrio bacteriovorus (strain ATCC 15356 / DSM 50701 / NCIMB 9529 / HD100) protein is Bifunctional protein FolD.